A 475-amino-acid chain; its full sequence is Adenosylhomocysteinase (475 aa).

Substrate is bound by residues Thr63, Asp138, and Glu199. 200-202 (TTT) is an NAD(+) binding site. Positions 229 and 233 each coordinate substrate. Residues Asn234, 263–268 (GYGDVG), Glu286, Asn321, 342–344 (IGH), and Asn389 each bind NAD(+).

The protein belongs to the adenosylhomocysteinase family. Requires NAD(+) as cofactor.

It is found in the cytoplasm. The enzyme catalyses S-adenosyl-L-homocysteine + H2O = L-homocysteine + adenosine. Its pathway is amino-acid biosynthesis; L-homocysteine biosynthesis; L-homocysteine from S-adenosyl-L-homocysteine: step 1/1. May play a key role in the regulation of the intracellular concentration of adenosylhomocysteine. The chain is Adenosylhomocysteinase from Solibacter usitatus (strain Ellin6076).